Here is a 56-residue protein sequence, read N- to C-terminus: Large ribosomal subunit protein bL32 (56 aa).

The tract at residues 1 to 27 (MAVQQNKKSRSRRDMRRSHDALTTAAV) is disordered. The segment covering 7–16 (KKSRSRRDMR) has biased composition (basic residues).

The protein belongs to the bacterial ribosomal protein bL32 family.

This chain is Large ribosomal subunit protein bL32, found in Actinobacillus pleuropneumoniae serotype 7 (strain AP76).